The following is a 122-amino-acid chain: UPF0102 protein BQ09720 (122 aa).

Belongs to the UPF0102 family.

The polypeptide is UPF0102 protein BQ09720 (Bartonella quintana (strain Toulouse) (Rochalimaea quintana)).